We begin with the raw amino-acid sequence, 149 residues long: 3-dehydroquinate dehydratase (149 aa).

The Proton acceptor role is filled by Y26. The substrate site is built by N77, H83, and D90. H103 (proton donor) is an active-site residue. Residues 104-105 and R114 each bind substrate; that span reads LS.

It belongs to the type-II 3-dehydroquinase family. Homododecamer.

The enzyme catalyses 3-dehydroquinate = 3-dehydroshikimate + H2O. It participates in metabolic intermediate biosynthesis; chorismate biosynthesis; chorismate from D-erythrose 4-phosphate and phosphoenolpyruvate: step 3/7. Its function is as follows. Catalyzes a trans-dehydration via an enolate intermediate. In Edwardsiella ictaluri (strain 93-146), this protein is 3-dehydroquinate dehydratase.